A 454-amino-acid polypeptide reads, in one-letter code: UDP-N-acetylmuramoylalanine--D-glutamate ligase (454 aa).

116 to 122 is an ATP binding site; it reads GTNGKTS.

It belongs to the MurCDEF family.

It localises to the cytoplasm. The enzyme catalyses UDP-N-acetyl-alpha-D-muramoyl-L-alanine + D-glutamate + ATP = UDP-N-acetyl-alpha-D-muramoyl-L-alanyl-D-glutamate + ADP + phosphate + H(+). It functions in the pathway cell wall biogenesis; peptidoglycan biosynthesis. Functionally, cell wall formation. Catalyzes the addition of glutamate to the nucleotide precursor UDP-N-acetylmuramoyl-L-alanine (UMA). The chain is UDP-N-acetylmuramoylalanine--D-glutamate ligase from Lachnoclostridium phytofermentans (strain ATCC 700394 / DSM 18823 / ISDg) (Clostridium phytofermentans).